Here is a 543-residue protein sequence, read N- to C-terminus: Zinc finger protein egl-43 (543 aa).

The tract at residues 2 to 62 is positive regulatory (PR) domain; the sequence is SIDTDFLTSV…NLIKEADDGE (61 aa). 2 consecutive C2H2-type zinc fingers follow at residues 159 to 181 and 187 to 209; these read HKCG…SHIH and FRCH…RRVH. The segment at 213 to 233 adopts a C2H2-type 3; atypical zinc-finger fold; sequence WTCPTCQSQMPSQAALTKHRP. Residues 299-380 form a disordered region; the sequence is PDAECSSGHA…TSTKKRPTSH (82 aa). Polar residues predominate over residues 306-317; that stretch reads GHASESSPTTTE. The segment covering 335 to 348 has biased composition (basic and acidic residues); the sequence is TTSKSDDGEDRDSI. C2H2-type zinc fingers lie at residues 444–466 and 472–495; these read YTCK…LRTH and YKCQ…RNIH. The segment at 496 to 543 is disordered; the sequence is NKPNTSLTPHNHHRQRSLHNSTSTSTTTTTVHHPLLHLPGTSVPVPKV. The segment covering 513-533 has biased composition (low complexity); sequence LHNSTSTSTTTTTVHHPLLHL.

The protein resides in the nucleus. Probable transcription factor, required for migration of the hermaphrodite-specific motor neurons (HSNs) from the tail to the gonad primordium during HSN cell differentiation. Required for phasmid neuron development. Required to specify the pi-cell fate of ventral uterine precursor cell (VU) cells. Functionally, probable transcription factor, involved in lin-12 (Notch)-dependent anchor cell (AC) and ventral uterine (VU) precursor cell fate specification and in AC invasion. Prevents AC proliferation after AC cell specification by repressing lin-12 expression. May form a positive feedback loop, together with the transcription factor fos-1, that maintains mutual high levels of expression and so activates AC invasion. Its function is as follows. Dispensable for anchor cell (AC) invasion and for preventing AC proliferation. This is Zinc finger protein egl-43 from Caenorhabditis elegans.